Here is a 75-residue protein sequence, read N- to C-terminus: Putative snRNP Sm-like protein (75 aa).

The Sm domain maps to 4-75 (RPLDVIHRSL…NVLAISPTEE (72 aa)).

This sequence belongs to the snRNP Sm proteins family.

The polypeptide is Putative snRNP Sm-like protein (Pyrococcus abyssi (strain GE5 / Orsay)).